Reading from the N-terminus, the 295-residue chain is Protein PAR32 (295 aa).

An N-acetylalanine modification is found at alanine 2. Phosphoserine is present on residues serine 36, serine 39, serine 47, serine 123, serine 138, serine 141, and serine 147. Over residues 134-153 (SATRSHQSLHATTSSPNNNA) the composition is skewed to polar residues. Disordered stretches follow at residues 134–156 (SATR…APIV) and 217–295 (TSKK…TMFN). Basic residues predominate over residues 217–227 (TSKKPKNKLKG). Phosphoserine is present on serine 246. Over residues 246-256 (SPKSSRNTINH) the composition is skewed to polar residues. Residues 265–274 (KFNLKDDNGK) show a composition bias toward basic and acidic residues. A compositionally biased stretch (basic residues) spans 275-284 (EKKKKKKKKS). Residues 285–295 (GFFSSLKTMFN) are compositionally biased toward low complexity.

In terms of processing, hyperphosphorylated after treatment with rapamycin in a TAP42-dependent manner.

The protein localises to the cytoplasm. Functionally, involved in resistance to cisplatin. The protein is Protein PAR32 (PAR32) of Saccharomyces cerevisiae (strain ATCC 204508 / S288c) (Baker's yeast).